Consider the following 259-residue polypeptide: Electron transfer flavoprotein subunit beta (259 aa).

The protein belongs to the ETF beta-subunit/FixA family. Heterodimer of an alpha and a beta subunit. FAD is required as a cofactor. Requires AMP as cofactor.

Functionally, the electron transfer flavoprotein serves as a specific electron acceptor for other dehydrogenases. It transfers the electrons to the main respiratory chain via ETF-ubiquinone oxidoreductase (ETF dehydrogenase). The chain is Electron transfer flavoprotein subunit beta (etfB) from Clostridium acetobutylicum (strain ATCC 824 / DSM 792 / JCM 1419 / IAM 19013 / LMG 5710 / NBRC 13948 / NRRL B-527 / VKM B-1787 / 2291 / W).